Here is a 749-residue protein sequence, read N- to C-terminus: Metabotropic glutamate receptor-like protein M (749 aa).

The signal sequence occupies residues Met-1–Ser-22. Residues Phe-23 to Lys-385 are Extracellular-facing. Residues Asn-67, Asn-164, Asn-257, Asn-271, and Asn-345 are each glycosylated (N-linked (GlcNAc...) asparagine). Residues Gly-386–Val-406 form a helical membrane-spanning segment. Topologically, residues Tyr-407–Pro-419 are cytoplasmic. The helical transmembrane segment at Ile-420–Val-440 threads the bilayer. Residues Gly-441–Thr-456 lie on the Extracellular side of the membrane. A helical transmembrane segment spans residues Leu-457–Phe-477. The Cytoplasmic segment spans residues Asp-478–Leu-492. A helical transmembrane segment spans residues Phe-493–Val-513. Topologically, residues Gly-514–Ser-544 are extracellular. The chain crosses the membrane as a helical span at residues Thr-545–Trp-565. At Lys-566–Lys-579 the chain is on the cytoplasmic side. The chain crosses the membrane as a helical span at residues Ala-580–Ile-600. Residues Ser-601–Thr-609 lie on the Extracellular side of the membrane. A helical membrane pass occupies residues Ile-610–Pro-630. The Cytoplasmic segment spans residues Lys-631–Glu-749. The disordered stretch occupies residues Ala-658–Glu-749. The segment covering Ser-698–Val-716 has biased composition (polar residues). The segment covering Phe-725–Glu-740 has biased composition (acidic residues).

In the N-terminal section; belongs to the BMP lipoprotein family. This sequence in the C-terminal section; belongs to the G-protein coupled receptor 3 family. GABA-B receptor subfamily.

The protein localises to the membrane. The polypeptide is Metabotropic glutamate receptor-like protein M (grlM) (Dictyostelium discoideum (Social amoeba)).